The following is a 755-amino-acid chain: von Willebrand factor A domain-containing protein 2 (755 aa).

An N-terminal signal peptide occupies residues 1-23 (MPPFLLLEAVCVFLFSRVPPSLP). The 172-residue stretch at 51 to 222 (DIMFLLDGSN…DATNGLFSTL (172 aa)) folds into the VWFA 1 domain. A glycan (N-linked (GlcNAc...) asparagine) is linked at Asn-147. Positions 296–333 (PGPCDSQPCQNGGTCVPEGLDGYQCLCPLAFGGEANCA) constitute an EGF-like 1 domain. 3 cysteine pairs are disulfide-bonded: Cys-299-Cys-310, Cys-304-Cys-320, and Cys-322-Cys-332. VWFA domains are found at residues 343–517 (DLLF…QGKL) and 531–705 (DLVF…IEWL). The EGF-like 2 domain occupies 712–748 (PVNLCKPSPCMNEGSCVLQNGSYRCKCRDGWEGPHCE). Cystine bridges form between Cys-716–Cys-727, Cys-721–Cys-736, and Cys-738–Cys-747.

Forms monomers and multimers. A 55 kDa form is produced by proteolytic cleavage. As to expression, expression is generally absent in normal colon and other normal body tissues, but it is induced an average of 78-fold in Stage II, III, and IV colon cancers, as well as in colon adenomas and colon cancer cell lines.

The protein localises to the secreted. The polypeptide is von Willebrand factor A domain-containing protein 2 (VWA2) (Homo sapiens (Human)).